Here is a 509-residue protein sequence, read N- to C-terminus: tRNA-2-methylthio-N(6)-dimethylallyladenosine synthase (509 aa).

A compositionally biased stretch (polar residues) spans 1–15; the sequence is MNEQQRLASQQVNSS. The segment at 1–26 is disordered; that stretch reads MNEQQRLASQQVNSSTKKEEKDYSKY. A compositionally biased stretch (basic and acidic residues) spans 16-25; sequence TKKEEKDYSK. Residues 66–184 enclose the MTTase N-terminal domain; the sequence is RKFYIRTYGC…LPYILKDAMF (119 aa). Positions 75, 111, 145, 221, 225, and 228 each coordinate [4Fe-4S] cluster. In terms of domain architecture, Radical SAM core spans 207–437; the sequence is RRGDIKAWVN…NALVNKLAIE (231 aa). In terms of domain architecture, TRAM spans 440–503; sequence DRYKGQIVEV…TWSLNGELVE (64 aa).

It belongs to the methylthiotransferase family. MiaB subfamily. Monomer. It depends on [4Fe-4S] cluster as a cofactor.

It is found in the cytoplasm. The enzyme catalyses N(6)-dimethylallyladenosine(37) in tRNA + (sulfur carrier)-SH + AH2 + 2 S-adenosyl-L-methionine = 2-methylsulfanyl-N(6)-dimethylallyladenosine(37) in tRNA + (sulfur carrier)-H + 5'-deoxyadenosine + L-methionine + A + S-adenosyl-L-homocysteine + 2 H(+). Its function is as follows. Catalyzes the methylthiolation of N6-(dimethylallyl)adenosine (i(6)A), leading to the formation of 2-methylthio-N6-(dimethylallyl)adenosine (ms(2)i(6)A) at position 37 in tRNAs that read codons beginning with uridine. The chain is tRNA-2-methylthio-N(6)-dimethylallyladenosine synthase from Bacillus thuringiensis (strain Al Hakam).